The sequence spans 186 residues: Elongation factor P (186 aa).

Lys33 carries the N6-(3,6-diaminohexanoyl)-5-hydroxylysine modification.

It belongs to the elongation factor P family. In terms of processing, may be beta-lysylated on the epsilon-amino group of Lys-33 by the combined action of EpmA and EpmB, and then hydroxylated on the C5 position of the same residue by EpmC (if this protein is present). Lysylation is critical for the stimulatory effect of EF-P on peptide-bond formation. The lysylation moiety may extend toward the peptidyltransferase center and stabilize the terminal 3-CCA end of the tRNA. Hydroxylation of the C5 position on Lys-33 may allow additional potential stabilizing hydrogen-bond interactions with the P-tRNA.

Its subcellular location is the cytoplasm. Its pathway is protein biosynthesis; polypeptide chain elongation. Functionally, involved in peptide bond synthesis. Alleviates ribosome stalling that occurs when 3 or more consecutive Pro residues or the sequence PPG is present in a protein, possibly by augmenting the peptidyl transferase activity of the ribosome. Modification of Lys-33 is required for alleviation. In Acidithiobacillus ferrooxidans (strain ATCC 23270 / DSM 14882 / CIP 104768 / NCIMB 8455) (Ferrobacillus ferrooxidans (strain ATCC 23270)), this protein is Elongation factor P.